The primary structure comprises 275 residues: Trans-aconitate 2-methyltransferase (275 aa).

Belongs to the methyltransferase superfamily. Tam family.

It is found in the cytoplasm. The catalysed reaction is trans-aconitate + S-adenosyl-L-methionine = (E)-3-(methoxycarbonyl)pent-2-enedioate + S-adenosyl-L-homocysteine. Its function is as follows. Catalyzes the S-adenosylmethionine monomethyl esterification of trans-aconitate. This is Trans-aconitate 2-methyltransferase from Pseudomonas aeruginosa (strain ATCC 15692 / DSM 22644 / CIP 104116 / JCM 14847 / LMG 12228 / 1C / PRS 101 / PAO1).